A 105-amino-acid polypeptide reads, in one-letter code: Large ribosomal subunit protein uL24 (105 aa).

The protein belongs to the universal ribosomal protein uL24 family. In terms of assembly, part of the 50S ribosomal subunit.

In terms of biological role, one of two assembly initiator proteins, it binds directly to the 5'-end of the 23S rRNA, where it nucleates assembly of the 50S subunit. Functionally, one of the proteins that surrounds the polypeptide exit tunnel on the outside of the subunit. This chain is Large ribosomal subunit protein uL24, found in Xanthomonas oryzae pv. oryzae (strain PXO99A).